Consider the following 170-residue polypeptide: Probable deoxyuridine 5'-triphosphate nucleotidohydrolase (170 aa).

Belongs to the dCTP deaminase family. Archaeal dUTPase subfamily.

It catalyses the reaction dUTP + H2O = dUMP + diphosphate + H(+). The protein operates within pyrimidine metabolism; dUMP biosynthesis; dUMP from dCTP (dUTP route): step 2/2. Its function is as follows. This enzyme is involved in nucleotide metabolism: it produces dUMP, the immediate precursor of thymidine nucleotides and it decreases the intracellular concentration of dUTP so that uracil cannot be incorporated into DNA. This is Probable deoxyuridine 5'-triphosphate nucleotidohydrolase from Methanococcoides burtonii (strain DSM 6242 / NBRC 107633 / OCM 468 / ACE-M).